We begin with the raw amino-acid sequence, 115 residues long: Large ribosomal subunit protein bL19 (115 aa).

The protein belongs to the bacterial ribosomal protein bL19 family.

Its function is as follows. This protein is located at the 30S-50S ribosomal subunit interface and may play a role in the structure and function of the aminoacyl-tRNA binding site. This chain is Large ribosomal subunit protein bL19 (rplS), found in Thermotoga maritima (strain ATCC 43589 / DSM 3109 / JCM 10099 / NBRC 100826 / MSB8).